We begin with the raw amino-acid sequence, 299 residues long: 4-diphosphocytidyl-2-C-methyl-D-erythritol kinase (299 aa).

Lysine 33 is an active-site residue. Residue proline 115–serine 125 coordinates ATP. Aspartate 154 is a catalytic residue.

Belongs to the GHMP kinase family. IspE subfamily.

The enzyme catalyses 4-CDP-2-C-methyl-D-erythritol + ATP = 4-CDP-2-C-methyl-D-erythritol 2-phosphate + ADP + H(+). It participates in isoprenoid biosynthesis; isopentenyl diphosphate biosynthesis via DXP pathway; isopentenyl diphosphate from 1-deoxy-D-xylulose 5-phosphate: step 3/6. In terms of biological role, catalyzes the phosphorylation of the position 2 hydroxy group of 4-diphosphocytidyl-2C-methyl-D-erythritol. In Deinococcus geothermalis (strain DSM 11300 / CIP 105573 / AG-3a), this protein is 4-diphosphocytidyl-2-C-methyl-D-erythritol kinase.